Reading from the N-terminus, the 1404-residue chain is DNA-directed RNA polymerase subunit beta' (1404 aa).

Zn(2+) is bound by residues cysteine 70, cysteine 72, cysteine 85, and cysteine 88. Residues aspartate 460, aspartate 462, and aspartate 464 each coordinate Mg(2+). The Zn(2+) site is built by cysteine 814, cysteine 888, cysteine 895, and cysteine 898.

Belongs to the RNA polymerase beta' chain family. As to quaternary structure, the RNAP catalytic core consists of 2 alpha, 1 beta, 1 beta' and 1 omega subunit. When a sigma factor is associated with the core the holoenzyme is formed, which can initiate transcription. Mg(2+) is required as a cofactor. Requires Zn(2+) as cofactor.

The enzyme catalyses RNA(n) + a ribonucleoside 5'-triphosphate = RNA(n+1) + diphosphate. DNA-dependent RNA polymerase catalyzes the transcription of DNA into RNA using the four ribonucleoside triphosphates as substrates. This Shewanella amazonensis (strain ATCC BAA-1098 / SB2B) protein is DNA-directed RNA polymerase subunit beta'.